Reading from the N-terminus, the 193-residue chain is Large ribosomal subunit protein uL18 (193 aa).

It belongs to the universal ribosomal protein uL18 family. As to quaternary structure, part of the 50S ribosomal subunit. Contacts the 5S and 23S rRNAs.

Its function is as follows. This is one of the proteins that bind and probably mediate the attachment of the 5S RNA into the large ribosomal subunit, where it forms part of the central protuberance. In Methanococcus maripaludis (strain DSM 14266 / JCM 13030 / NBRC 101832 / S2 / LL), this protein is Large ribosomal subunit protein uL18.